The following is a 648-amino-acid chain: MDSENSSSHSISSPQMFQNTHNNSAMEDNLLSRPMNNESLQMIIGYLRRNGLTETEELLTREAGPVLRVEGSNGLPPEEAISVEFDTFVQHANDCTDVVQAEFSQLLFPIFAHSYIALIEKHAATARIFFNRFKIFIPECFSEFVYQLSLIEDAMTLRANEHVHILRENKFLVRLSRPTLKHLESIQTRVIGVKNIIAKHICIENADEVSTNRTTIETQMGGILGVTSKSDKRHKMMFSVLKDELMQNIEKRKTKGKDWKDMGKKMQTHCPQADRIPLPPISEHLREERRNWLRDVGKMAIISAESPVSICMYTTVNAPIGVASCDFTDDSSLIAMGLSDSSIVMNAMDPMNKMKKLRDMEFLDKIDIETADNVQSQMFDLQGSTTSVRYTGHGGPVFSVNFSPDRRLLISSAGDRTVRLWSMETQRNAVIYRTPAVVWQAQFCSRGYYFATASADKTAAMWSTDRMHPLRIFADPYGDVGCIDYHPNCNYIAGGSDDRYVRVWDVCSGTRVRIFSGHKASIIAVKFSPCGRYIVSLDAIGNLMIWDLAYQRLVAAEITEQAGTKGSITFSRDGGVFAVSHGNSSIQLYSLDTLIGTVLAAGQNDSYIEPKVNLDGFNIGSYATKETAVIGLHFTRRNLLLGFGCFGQ.

Positions Met-1–Ser-13 are enriched in low complexity. The disordered stretch occupies residues Met-1–His-21. The LisH domain occupies Met-35–Leu-67. WD repeat units lie at residues Asn-317 to Arg-358, Gly-392 to Ile-431, Arg-433 to Ile-472, Asp-475 to Ile-514, Gly-517 to Ala-556, and Glu-560 to Leu-599.

The protein belongs to the WD repeat TAF5 family. In terms of assembly, component of the TFIID basal transcription factor complex, composed of TATA-box-binding protein tbp-1, and a number of TBP-associated factors (TAFs).

It is found in the nucleus. Functionally, the TFIID basal transcription factor complex plays a major role in the initiation of RNA polymerase II (Pol II)-dependent transcription. TFIID recognizes and binds promoters via its subunit tbp-1, a TATA-box-binding protein, and promotes assembly of the pre-initiation complex (PIC). The TFIID complex consists of tbp-1 and TBP-associated factors (TAFs), including taf-5. Essential for early embryonic development, but not required for transcription of some genes; probably acts via activating transcription initiation by RNA Pol II, as part of the TFIID complex. The sequence is that of Transcription initiation factor TFIID subunit 5 from Caenorhabditis elegans.